Here is a 266-residue protein sequence, read N- to C-terminus: MAKSLFRALVALSFLAPLWLNAAPRVITLSPANTELAFAAGITPVGVSSYSDYPPQAQKIEQVSTWQGMNLERIVALKPDLVIAWRGGNAERQVDQLASLGIKVMWVDATSIEQIANALRQLAPWSPQPDKAEQAAQSLLDQYAQLKAQYADKPKKRVFLQFGINPPFTSGKESIQNQVLEVCGGENIFKDSRVPWPQVSREQVLARSPQAIVITGGPDQIPKIKQYWGEQLKIPVIPLTSDWFERASPRIILAAQQLCNALSQVD.

The first 22 residues, 1–22 (MAKSLFRALVALSFLAPLWLNA), serve as a signal peptide directing secretion. One can recognise a Fe/B12 periplasmic-binding domain in the interval 25-266 (RVITLSPANT…QLCNALSQVD (242 aa)). Residues Tyr-50 and 242 to 246 (DWFER) contribute to the cyanocob(III)alamin site. A disulfide bridge connects residues Cys-183 and Cys-259.

This sequence belongs to the BtuF family. As to quaternary structure, the complex is composed of two ATP-binding proteins (BtuD), two transmembrane proteins (BtuC) and a solute-binding protein (BtuF).

Its subcellular location is the periplasm. Part of the ABC transporter complex BtuCDF involved in vitamin B12 import. Binds vitamin B12 and delivers it to the periplasmic surface of BtuC. This Escherichia coli (strain K12) protein is Vitamin B12-binding protein (btuF).